The primary structure comprises 422 residues: Retinoic acid receptor RXR-beta-B (422 aa).

Residues Met1–Met89 are modulating. 2 consecutive NR C4-type zinc fingers follow at residues Cys90–Cys110 and Cys126–Cys150. The nuclear receptor DNA-binding region spans Cys90–Met155. The hinge stretch occupies residues Lys156–Ser178. Residues Gln161–Asp173 show a composition bias toward basic and acidic residues. Residues Gln161–Glu182 form a disordered region. The 241-residue stretch at Asn181–Pro421 folds into the NR LBD domain.

This sequence belongs to the nuclear hormone receptor family. NR2 subfamily. In terms of assembly, homodimer. Heterodimer; with a rar molecule. Binds DNA preferentially as a rar/rxr heterodimer. Heterodimerizes with rarga. In terms of tissue distribution, shows uniform expression from the blastula to mid-gastrula stages. At 12 hours post-fertilization (hpf), expressed ubiquitously but more weakly. At 24 hpf, restricted to the ventral diencephalon, pharangeal endoderm and trunk and tail mesoderm; mesoderm expression is in medial cells of each somite along the dorsoventral axis, forming stripes. At 48 hpf, expressed in forebrain, eye, midbrain and anterior hindbrain.

It localises to the nucleus. Functionally, receptor for retinoic acid. Retinoic acid receptors bind as heterodimers to their target response elements in response to their ligands, all-trans or 9-cis retinoic acid, and regulate gene expression in various biological processes. The rar/rxr heterodimers bind to the retinoic acid response elements (RARE) composed of tandem 5'-AGGTCA-3' sites known as DR1-DR5. The high affinity ligand for rxrs is 9-cis retinoic acid. The polypeptide is Retinoic acid receptor RXR-beta-B (rxrbb) (Danio rerio (Zebrafish)).